A 147-amino-acid chain; its full sequence is MKIIIQRVNQASVSIEDDVVGSIEKGLVLLVGIAPEDTTEDIAYAVRKITSMRIFSDDEGRMNLSIQDIKGSVLSISQFTLFADTKKGNRPAFTGAADPVKANQFYDIFNQELANHVSVETGQFGADMQVSLINDGPVTIVLDTKNK.

The short motif at 136-137 (GP) is the Gly-cisPro motif, important for rejection of L-amino acids element.

This sequence belongs to the DTD family. In terms of assembly, homodimer.

Its subcellular location is the cytoplasm. It carries out the reaction glycyl-tRNA(Ala) + H2O = tRNA(Ala) + glycine + H(+). The catalysed reaction is a D-aminoacyl-tRNA + H2O = a tRNA + a D-alpha-amino acid + H(+). Its function is as follows. An aminoacyl-tRNA editing enzyme that deacylates mischarged D-aminoacyl-tRNAs. Also deacylates mischarged glycyl-tRNA(Ala), protecting cells against glycine mischarging by AlaRS. Acts via tRNA-based rather than protein-based catalysis; rejects L-amino acids rather than detecting D-amino acids in the active site. By recycling D-aminoacyl-tRNA to D-amino acids and free tRNA molecules, this enzyme counteracts the toxicity associated with the formation of D-aminoacyl-tRNA entities in vivo and helps enforce protein L-homochirality. This chain is D-aminoacyl-tRNA deacylase, found in Streptococcus agalactiae serotype Ia (strain ATCC 27591 / A909 / CDC SS700).